Reading from the N-terminus, the 278-residue chain is Thioredoxin-related transmembrane protein 1 (278 aa).

A signal peptide spans 1–26 (MAHLGRLMVPLAALVLLLWAVPGAHG). The Thioredoxin domain occupies 27–132 (RRNNVRVLTD…FINFVSDKEW (106 aa)). Residues 27-181 (RRNNVRVLTD…DLGIPAWGSY (155 aa)) are Extracellular-facing. Catalysis depends on nucleophile residues Cys-56 and Cys-59. The cysteines at positions 56 and 59 are disulfide-linked. Residues 182-202 (LVFAFATVLSGLLLGLCMIFV) form a helical membrane-spanning segment. Topologically, residues 203-278 (ADCLCPSKRR…VGLPSATDTS (76 aa)) are cytoplasmic. S-palmitoyl cysteine attachment occurs at residues Cys-205 and Cys-207. Over residues 217–226 (QYAKKTSPEF) the composition is skewed to polar residues. The segment at 217 to 278 (QYAKKTSPEF…VGLPSATDTS (62 aa)) is disordered. Positions 235 to 251 (EEQEADEEDVSEEEAED) are enriched in acidic residues. A phosphoserine mark is found at Ser-245 and Ser-278.

In terms of assembly, interacts with ATP2A2. Post-translationally, palmitoylated; palmitoylation is required for localization to mitochondria-associated endoplasmic reticulum membrane (MAM).

The protein resides in the endoplasmic reticulum membrane. Its subcellular location is the mitochondrion membrane. It is found in the secreted. It carries out the reaction Catalyzes the rearrangement of -S-S- bonds in proteins.. In terms of biological role, thiredoxin domain-containing protein that participates in various redox reactions through the reversible oxidation of its active center dithiol to a disulfide and catalyze dithiol-disulfide exchange reactions. Acts as a key inhibitor of the alternative triglyceride biosynthesis pathway by inhibiting the activity of TMEM68/DIESL at the endoplasmic reticulum, thereby restricting accumulation of triacylglycerol. The alternative triglyceride biosynthesis pathway mediates formation of triacylglycerol from diacylglycerol and membrane phospholipids. Acts as a protein disulfide isomerase by catalyzing formation or reduction of disulfide bonds. Specifically mediates formation of disulfide bonds of transmembrane proteins at the endoplasmic reticulum membrane. Involved in ER-associated degradation (ERAD) via its protein disulfide isomerase activity by acting on folding-defective polypeptides at the endoplasmic reticulum membrane. Acts as a negative regulator of platelet aggregation following secretion in the extracellular space. Acts as a regulator of endoplasmic reticulum-mitochondria contact sites via its ability to regulate redox signals. Regulates endoplasmic reticulum-mitochondria Ca(2+) flux. In Mus musculus (Mouse), this protein is Thioredoxin-related transmembrane protein 1.